Here is a 457-residue protein sequence, read N- to C-terminus: Secreted RxLR effector protein 8 (457 aa).

Residues 1 to 19 form the signal peptide; the sequence is MRGTLATALLLVISSRVAT. The short motif at 48-69 is the RxLR-dEER element; the sequence is RFLRGSRKQRDDLAPTAADENR. The N-linked (GlcNAc...) asparagine glycan is linked to asparagine 68. 2 disordered regions span residues 110–188 and 398–457; these read RLSL…ALKS and RQTI…RSSS. Residues 135–152 show a composition bias toward low complexity; it reads SASTSTTSDIATSSSRTS. Polar residues-rich tracts occupy residues 153 to 163 and 176 to 187; these read NQRTPKTQASL and SKNQFKKSTALK. The span at 442 to 457 shows a compositional bias: basic residues; that stretch reads IKSKDHARKKRPRSSS.

The protein belongs to the RxLR effector family.

It is found in the secreted. The protein localises to the host nucleus. Its function is as follows. Secreted effector that completely suppresses the host cell death induced by cell death-inducing proteins. This Plasmopara viticola (Downy mildew of grapevine) protein is Secreted RxLR effector protein 8.